Reading from the N-terminus, the 400-residue chain is Lysophospholipid transporter LplT (400 aa).

12 helical membrane-spanning segments follow: residues 19 to 39 (VIVA…ATLA), 53 to 73 (VLQM…GQIA), 91 to 111 (AGAA…LVGI), 139 to 159 (LMEA…GVLA), 164 to 184 (IAAL…NLFI), 195 to 213 (SWRL…VVLW), 227 to 247 (LFWG…PVAL), 257 to 277 (YLNA…AKLV), 281 to 301 (TVSR…IFSL), 304 to 324 (ALLP…FFVV), 352 to 372 (NSAM…GVPA), and 373 to 393 (VAIG…LWIW).

This sequence belongs to the major facilitator superfamily. LplT (TC 2.A.1.42) family.

The protein localises to the cell inner membrane. Its function is as follows. Catalyzes the facilitated diffusion of 2-acyl-glycero-3-phosphoethanolamine (2-acyl-GPE) into the cell. The polypeptide is Lysophospholipid transporter LplT (Salmonella agona (strain SL483)).